Reading from the N-terminus, the 147-residue chain is UPF0306 protein YhbP (147 aa).

This sequence belongs to the UPF0306 family.

The sequence is that of UPF0306 protein YhbP from Escherichia fergusonii (strain ATCC 35469 / DSM 13698 / CCUG 18766 / IAM 14443 / JCM 21226 / LMG 7866 / NBRC 102419 / NCTC 12128 / CDC 0568-73).